Here is a 127-residue protein sequence, read N- to C-terminus: MORF4 family-associated protein 1 (127 aa).

Residues 92–126 (RAAKRCEKAEEKAKEIAKMAEMLVELVRRIEKSES) adopt a coiled-coil conformation.

The protein belongs to the MORF4 family-associated protein family. Found in a complex composed of MORF4L1, MRFAP1 and RB1. Interacts via its N-terminus with MORF4L1. Interacts with CSTB and MORF4L2.

The protein localises to the nucleus. The protein resides in the cytoplasm. It localises to the perinuclear region. The protein is MORF4 family-associated protein 1 of Homo sapiens (Human).